We begin with the raw amino-acid sequence, 91 residues long: Large ribosomal subunit protein eL43 (91 aa).

Residues 39–60 (CSFCGKDAVRRSSVGIWKCNGC) form a C4-type zinc finger.

Belongs to the eukaryotic ribosomal protein eL43 family.

This Dictyostelium discoideum (Social amoeba) protein is Large ribosomal subunit protein eL43 (rpl37A).